We begin with the raw amino-acid sequence, 401 residues long: Inositol phosphorylceramide synthase catalytic subunit AUR1 (401 aa).

Topologically, residues 1 to 41 are cytoplasmic; it reads MANPFSRWFLSERPPNCHVADLETSLDPHQTLLKVQKYKPA. Residues 42–62 traverse the membrane as a helical segment; the sequence is LSDWVHYIFLGSIMLFVFITN. At 63 to 64 the chain is on the lumenal side; that stretch reads PA. The chain crosses the membrane as a helical span at residues 65-85; sequence PWIFKILFYCFLGTLFIIPAT. Residues 86-87 lie on the Cytoplasmic side of the membrane; sequence SQ. A helical transmembrane segment spans residues 88 to 108; the sequence is FFFNALPILTWVALYFTSSYF. The Lumenal portion of the chain corresponds to 109–155; it reads PDDRRPPITVKVLPAVETILYGDNLSDILATSTNSFLDILAWLPYGL. Asn132 is a glycosylation site (N-linked (GlcNAc...) asparagine). The helical transmembrane segment at 156-176 threads the bilayer; it reads FHFGAPFVVAAILFVFGPPTV. At 177–178 the chain is on the cytoplasmic side; the sequence is LQ. A helical transmembrane segment spans residues 179–199; sequence GYAFAFGYMNLFGVIMQNVFP. Over 200-245 the chain is Lumenal; sequence AAPPWYKILYGLQSANYDMHGSPGGLARIDKLLGINMYTTAFSNSS. The chain crosses the membrane as a helical span at residues 246 to 266; that stretch reads VIFGAFPSLHSGCATMEALFF. Residues 267 to 268 lie on the Cytoplasmic side of the membrane; the sequence is CY. Residues 269–289 form a helical membrane-spanning segment; the sequence is CFPKLKPLFIAYVCWLWWSTM. Over 290 to 291 the chain is Lumenal; it reads YL. Residues 292–312 traverse the membrane as a helical segment; the sequence is THHYFVDLMAGSVLSYVIFQY. At 313-401 the chain is on the cytoplasmic side; sequence TKYTHLPIVD…SITSLGVKRA (89 aa). A disordered region spans residues 374 to 401; the sequence is VSPSLFDGSTSVSRSSATSITSLGVKRA. The span at 382–395 shows a compositional bias: low complexity; it reads STSVSRSSATSITS. 2 positions are modified to phosphoserine: Ser392 and Ser395.

This sequence belongs to the AUR1 family. In terms of assembly, component of the inositol phosphorylceramide synthase complex composed of at least AUR1 and KEI1.

It is found in the golgi apparatus. Its subcellular location is the golgi stack membrane. The catalysed reaction is an N-(2R-hydroxy-very-long-chain fatty acyl)-(R)-4-hydroxysphingoid base + a 1,2-diacyl-sn-glycero-3-phospho-(1D-myo-inositol) = a 1D-myo-inositol-1-phospho-N-[(R)-2-hydroxy-very-long-chain fatty acyl]-(R)-4-hydroxysphingoid base + a 1,2-diacyl-sn-glycerol. Inhibited by aureobasidin A (AbA), khafrefungin and rustmicin. Its function is as follows. Catalytic component of the inositol phosphorylceramide synthase which catalyzes the addition of a phosphorylinositol group onto ceramide to form inositol phosphorylceramide, an essential step in sphingolipid biosynthesis. The chain is Inositol phosphorylceramide synthase catalytic subunit AUR1 from Saccharomyces cerevisiae (strain ATCC 204508 / S288c) (Baker's yeast).